A 355-amino-acid chain; its full sequence is tRNA-specific 2-thiouridylase MnmA (355 aa).

ATP contacts are provided by residues 6–13 and Met32; that span reads AMSGGVDS. Cys93 functions as the Nucleophile in the catalytic mechanism. An intrachain disulfide couples Cys93 to Cys191. Gly117 is an ATP binding site. Residues 140–142 are interaction with tRNA; the sequence is KDQ. Cys191 acts as the Cysteine persulfide intermediate in catalysis. The interaction with tRNA stretch occupies residues 296–297; sequence RY.

It belongs to the MnmA/TRMU family.

The protein resides in the cytoplasm. The catalysed reaction is S-sulfanyl-L-cysteinyl-[protein] + uridine(34) in tRNA + AH2 + ATP = 2-thiouridine(34) in tRNA + L-cysteinyl-[protein] + A + AMP + diphosphate + H(+). Its function is as follows. Catalyzes the 2-thiolation of uridine at the wobble position (U34) of tRNA, leading to the formation of s(2)U34. The chain is tRNA-specific 2-thiouridylase MnmA from Pelobacter propionicus (strain DSM 2379 / NBRC 103807 / OttBd1).